We begin with the raw amino-acid sequence, 449 residues long: UDP-N-acetylmuramoylalanine--D-glutamate ligase (449 aa).

113 to 119 is a binding site for ATP; the sequence is GTNGKTT.

Belongs to the MurCDEF family.

Its subcellular location is the cytoplasm. It carries out the reaction UDP-N-acetyl-alpha-D-muramoyl-L-alanine + D-glutamate + ATP = UDP-N-acetyl-alpha-D-muramoyl-L-alanyl-D-glutamate + ADP + phosphate + H(+). The protein operates within cell wall biogenesis; peptidoglycan biosynthesis. Functionally, cell wall formation. Catalyzes the addition of glutamate to the nucleotide precursor UDP-N-acetylmuramoyl-L-alanine (UMA). The polypeptide is UDP-N-acetylmuramoylalanine--D-glutamate ligase (Microcystis aeruginosa (strain NIES-843 / IAM M-2473)).